A 207-amino-acid chain; its full sequence is Protein DMP1 (207 aa).

Positions 1–20 (MSETSLLIPKTNSPASSENM) are disordered. 4 consecutive transmembrane segments (helical) span residues 33–53 (LIKL…PVLT), 64–84 (VMSS…CFTD), 121–141 (IADF…VLLD), and 159–179 (LVMA…ALFP).

Belongs to the plant DMP1 protein family. In terms of tissue distribution, expressed in leaves, siliques and roots.

It localises to the endoplasmic reticulum membrane. The protein resides in the vacuole membrane. Functionally, involved in membrane remodeling including fission during breakdown of the endoplasmic reticulum (ER) and the tonoplast during leaf senescence and in membrane fusion during vacuole biogenesis in roots. The sequence is that of Protein DMP1 from Arabidopsis thaliana (Mouse-ear cress).